A 155-amino-acid chain; its full sequence is UPF0178 protein RHE_CH02229 (155 aa).

Belongs to the UPF0178 family.

In Rhizobium etli (strain ATCC 51251 / DSM 11541 / JCM 21823 / NBRC 15573 / CFN 42), this protein is UPF0178 protein RHE_CH02229.